Reading from the N-terminus, the 309-residue chain is Homoserine O-succinyltransferase (309 aa).

The active-site Acyl-thioester intermediate is Cys-142. Lys-163 and Ser-192 together coordinate substrate. His-235 serves as the catalytic Proton acceptor. The active site involves Glu-237. Substrate is bound at residue Arg-249.

It belongs to the MetA family. In terms of assembly, homodimer.

It localises to the cytoplasm. It carries out the reaction L-homoserine + succinyl-CoA = O-succinyl-L-homoserine + CoA. Its pathway is amino-acid biosynthesis; L-methionine biosynthesis via de novo pathway; O-succinyl-L-homoserine from L-homoserine: step 1/1. Transfers a succinyl group from succinyl-CoA to L-homoserine, forming succinyl-L-homoserine. In Escherichia coli (strain ATCC 8739 / DSM 1576 / NBRC 3972 / NCIMB 8545 / WDCM 00012 / Crooks), this protein is Homoserine O-succinyltransferase.